The sequence spans 275 residues: Putative ribonuclease-like protein YfkH (275 aa).

Transmembrane regions (helical) follow at residues 23-43 (LAYF…TLTA), 83-103 (LLSF…NAIV), 126-146 (IFLT…PVFG), 172-192 (WGVS…IAPN), 199-219 (FVMP…TLFS), and 235-255 (IGGI…IILG).

It localises to the cell membrane. The sequence is that of Putative ribonuclease-like protein YfkH (yfkH) from Bacillus subtilis (strain 168).